Consider the following 483-residue polypeptide: NAD-dependent protein deacetylase SRT1 (483 aa).

The 244-residue stretch at 27-270 (PELLHKKIEE…MYMMNLRIPP (244 aa)) folds into the Deacetylase sirtuin-type domain. Residues 53–57 (AGIST), 63–65 (DFR), and 114–117 (QNVD) contribute to the NAD(+) site. H134 serves as the catalytic Proton acceptor. The Zn(2+) site is built by C142, C145, C167, and C172. Residues 209–211 (GTS) and 235–237 (NLQ) contribute to the NAD(+) site.

The protein belongs to the sirtuin family. Class IV subfamily. The cofactor is Zn(2+).

It is found in the nucleus. It carries out the reaction N(6)-acetyl-L-lysyl-[protein] + NAD(+) + H2O = 2''-O-acetyl-ADP-D-ribose + nicotinamide + L-lysyl-[protein]. In terms of biological role, NAD-dependent protein deacetylase. Has deacetylase activity towards H3K9Ac. May have a function in the safeguard against genome instability and DNA damage to ensure plant cell growth. May negatively regulate metabolic signal transduction involving methanol and jasmonates during leaf senescence. Required for histone H3K9Ac deacetylation and repression of AP2-1/RSR1 and amylase genes during early seed development. Functions as an epigenetic regulator to repress the expression of glycolytic genes and glycolysis in seedlings. Reduces lysine acetylation of the glycolytic glyceraldehyde-3-phosphate dehydrogenase (GAPDH), which is found to also function as an activator of glycolytic gene expression. This Oryza sativa subsp. indica (Rice) protein is NAD-dependent protein deacetylase SRT1.